A 242-amino-acid polypeptide reads, in one-letter code: MNNIPSIEAVKDIRSGTCGPVAAPAVTSDLSENIILTSLDDLHNWARLSSLWPLLYGTACCFIEFAALIGSRFDFDRFGLVPRSSPRQADLLIVAGTVTMKMAPALVRLYEQMPDPKYVIAMGACTITGGMFSADSTTAVRGVDKLIPVDLYLPGCPPRPEAIFDAVIKLRKKVGNESFLERKKITQTHRYFTITHKMKRINPLVNGSYLNAKTQKAALKAGDDISLPTKSESIETTTKELN.

[4Fe-4S] cluster is bound by residues cysteine 60, cysteine 61, cysteine 125, and cysteine 156.

The protein belongs to the complex I 20 kDa subunit family. In terms of assembly, NDH-1 can be composed of about 15 different subunits; different subcomplexes with different compositions have been identified which probably have different functions. [4Fe-4S] cluster is required as a cofactor.

The protein resides in the cellular thylakoid membrane. It carries out the reaction a plastoquinone + NADH + (n+1) H(+)(in) = a plastoquinol + NAD(+) + n H(+)(out). The catalysed reaction is a plastoquinone + NADPH + (n+1) H(+)(in) = a plastoquinol + NADP(+) + n H(+)(out). Its function is as follows. NDH-1 shuttles electrons from an unknown electron donor, via FMN and iron-sulfur (Fe-S) centers, to quinones in the respiratory and/or the photosynthetic chain. The immediate electron acceptor for the enzyme in this species is believed to be plastoquinone. Couples the redox reaction to proton translocation, and thus conserves the redox energy in a proton gradient. Cyanobacterial NDH-1 also plays a role in inorganic carbon-concentration. The polypeptide is NAD(P)H-quinone oxidoreductase subunit K (Prochlorococcus marinus (strain SARG / CCMP1375 / SS120)).